Consider the following 141-residue polypeptide: Nucleoside diphosphate kinase (141 aa).

ATP-binding residues include Lys11, Phe59, Arg87, Thr93, Arg104, and Asn114. The active-site Pros-phosphohistidine intermediate is His117.

Belongs to the NDK family. Homotetramer. It depends on Mg(2+) as a cofactor.

The protein localises to the cytoplasm. The catalysed reaction is a 2'-deoxyribonucleoside 5'-diphosphate + ATP = a 2'-deoxyribonucleoside 5'-triphosphate + ADP. It carries out the reaction a ribonucleoside 5'-diphosphate + ATP = a ribonucleoside 5'-triphosphate + ADP. In terms of biological role, major role in the synthesis of nucleoside triphosphates other than ATP. The ATP gamma phosphate is transferred to the NDP beta phosphate via a ping-pong mechanism, using a phosphorylated active-site intermediate. In Polaromonas naphthalenivorans (strain CJ2), this protein is Nucleoside diphosphate kinase.